We begin with the raw amino-acid sequence, 343 residues long: Uroporphyrinogen decarboxylase (343 aa).

Residues 23–27 (RQAGR), Asp-73, Tyr-150, Ser-205, and His-322 each bind substrate.

Belongs to the uroporphyrinogen decarboxylase family. Homodimer.

Its subcellular location is the cytoplasm. The enzyme catalyses uroporphyrinogen III + 4 H(+) = coproporphyrinogen III + 4 CO2. The protein operates within porphyrin-containing compound metabolism; protoporphyrin-IX biosynthesis; coproporphyrinogen-III from 5-aminolevulinate: step 4/4. In terms of biological role, catalyzes the decarboxylation of four acetate groups of uroporphyrinogen-III to yield coproporphyrinogen-III. The protein is Uroporphyrinogen decarboxylase of Cereibacter sphaeroides (strain ATCC 17029 / ATH 2.4.9) (Rhodobacter sphaeroides).